A 325-amino-acid chain; its full sequence is Transaldolase (325 aa).

The active-site Schiff-base intermediate with substrate is the Lys-125.

Belongs to the transaldolase family. Type 2 subfamily.

The protein localises to the cytoplasm. The enzyme catalyses D-sedoheptulose 7-phosphate + D-glyceraldehyde 3-phosphate = D-erythrose 4-phosphate + beta-D-fructose 6-phosphate. Its pathway is carbohydrate degradation; pentose phosphate pathway; D-glyceraldehyde 3-phosphate and beta-D-fructose 6-phosphate from D-ribose 5-phosphate and D-xylulose 5-phosphate (non-oxidative stage): step 2/3. Its function is as follows. Transaldolase is important for the balance of metabolites in the pentose-phosphate pathway. The polypeptide is Transaldolase (Campylobacter jejuni subsp. doylei (strain ATCC BAA-1458 / RM4099 / 269.97)).